Here is a 442-residue protein sequence, read N- to C-terminus: Histidine--tRNA ligase (442 aa).

Belongs to the class-II aminoacyl-tRNA synthetase family. In terms of assembly, homodimer.

The protein resides in the cytoplasm. The catalysed reaction is tRNA(His) + L-histidine + ATP = L-histidyl-tRNA(His) + AMP + diphosphate + H(+). This is Histidine--tRNA ligase from Rhodopirellula baltica (strain DSM 10527 / NCIMB 13988 / SH1).